The sequence spans 54 residues: Ovomucoid (54 aa).

One can recognise a Kazal-like domain in the interval 4-54; sequence VDCSDYPTHGCTLELKPICGSDNQTYSNKCGFCNAVAQSNGTLTLSHFGKC. 3 cysteine pairs are disulfide-bonded: Cys6-Cys36, Cys14-Cys33, and Cys22-Cys54. Asn43 carries N-linked (GlcNAc...) asparagine glycosylation.

Its subcellular location is the secreted. This Aepypodius arfakianus (Wattled brush turkey) protein is Ovomucoid.